We begin with the raw amino-acid sequence, 266 residues long: Glucosamine-6-phosphate deaminase (266 aa).

Residue Asp-72 is the Proton acceptor; for enolization step of the active site. Asp-141 serves as the catalytic For ring-opening step. His-143 functions as the Proton acceptor; for ring-opening step in the catalytic mechanism. Glu-148 functions as the For ring-opening step in the catalytic mechanism.

It belongs to the glucosamine/galactosamine-6-phosphate isomerase family. NagB subfamily. In terms of assembly, homohexamer.

The catalysed reaction is alpha-D-glucosamine 6-phosphate + H2O = beta-D-fructose 6-phosphate + NH4(+). Its pathway is amino-sugar metabolism; N-acetylneuraminate degradation; D-fructose 6-phosphate from N-acetylneuraminate: step 5/5. Allosterically activated by N-acetylglucosamine 6-phosphate (GlcNAc6P). Catalyzes the reversible isomerization-deamination of glucosamine 6-phosphate (GlcN6P) to form fructose 6-phosphate (Fru6P) and ammonium ion. This chain is Glucosamine-6-phosphate deaminase, found in Serratia proteamaculans (strain 568).